We begin with the raw amino-acid sequence, 124 residues long: UPF0231 protein Shewana3_0655 (124 aa).

Belongs to the UPF0231 family.

The polypeptide is UPF0231 protein Shewana3_0655 (Shewanella sp. (strain ANA-3)).